Here is a 344-residue protein sequence, read N- to C-terminus: Dihydroorotate dehydrogenase (quinone) (344 aa).

FMN is bound by residues 65-69 and threonine 89; that span reads AGLDK. Lysine 69 serves as a coordination point for substrate. Position 114–118 (114–118) interacts with substrate; it reads NRMGF. Positions 142 and 175 each coordinate FMN. Asparagine 175 contacts substrate. Catalysis depends on serine 178, which acts as the Nucleophile. Substrate is bound at residue asparagine 180. Residues lysine 220 and threonine 248 each coordinate FMN. 249-250 is a binding site for substrate; sequence NT. FMN-binding positions include glycine 271, glycine 300, and 321-322; that span reads YT.

The protein belongs to the dihydroorotate dehydrogenase family. Type 2 subfamily. Monomer. It depends on FMN as a cofactor.

It localises to the cell membrane. The catalysed reaction is (S)-dihydroorotate + a quinone = orotate + a quinol. The protein operates within pyrimidine metabolism; UMP biosynthesis via de novo pathway; orotate from (S)-dihydroorotate (quinone route): step 1/1. In terms of biological role, catalyzes the conversion of dihydroorotate to orotate with quinone as electron acceptor. The polypeptide is Dihydroorotate dehydrogenase (quinone) (Paraburkholderia phymatum (strain DSM 17167 / CIP 108236 / LMG 21445 / STM815) (Burkholderia phymatum)).